Consider the following 500-residue polypeptide: Protein dcd1B (500 aa).

The first 20 residues, 1 to 20 (MNLIKLFIICCLLISITVKS), serve as a signal peptide directing secretion. N-linked (GlcNAc...) asparagine glycosylation is found at Asn-284, Asn-331, Asn-441, Asn-459, Asn-474, and Asn-475. Residues 464–500 (FSEQPPLPPPNNSSSSDSNSNSNSDSSSSSDSNSNSN) form a disordered region. Residues 475–500 (NSSSSDSNSNSNSDSSSSSDSNSNSN) show a composition bias toward low complexity.

It is found in the secreted. This Dictyostelium discoideum (Social amoeba) protein is Protein dcd1B (dcd1B).